The following is a 244-amino-acid chain: 3-oxoacyl-[acyl-carrier-protein] reductase FabG (244 aa).

Residues 12-15 (GANQ) and Thr-37 each bind NADP(+). Residues Lys-50 and Gly-53 each contribute to the Ca(2+) site. NADP(+) is bound by residues 59 to 60 (DL) and Asn-86. Ser-138 is a substrate binding site. Asn-145 contacts Ca(2+). Tyr-151 functions as the Proton acceptor in the catalytic mechanism. NADP(+) contacts are provided by residues 151–155 (YSASK) and Ile-184. Gln-233 and Thr-234 together coordinate Ca(2+).

The protein belongs to the short-chain dehydrogenases/reductases (SDR) family. In terms of assembly, homotetramer.

The enzyme catalyses a (3R)-hydroxyacyl-[ACP] + NADP(+) = a 3-oxoacyl-[ACP] + NADPH + H(+). The protein operates within lipid metabolism; fatty acid biosynthesis. Its function is as follows. Catalyzes the NADPH-dependent reduction of beta-ketoacyl-ACP substrates to beta-hydroxyacyl-ACP products, the first reductive step in the elongation cycle of fatty acid biosynthesis. This Buchnera aphidicola subsp. Schizaphis graminum (strain Sg) protein is 3-oxoacyl-[acyl-carrier-protein] reductase FabG (fabG).